Here is a 148-residue protein sequence, read N- to C-terminus: Aspartate carbamoyltransferase regulatory chain (148 aa).

Positions 106, 111, 134, and 137 each coordinate Zn(2+).

Belongs to the PyrI family. Contains catalytic and regulatory chains. Requires Zn(2+) as cofactor.

Involved in allosteric regulation of aspartate carbamoyltransferase. This chain is Aspartate carbamoyltransferase regulatory chain, found in Methanococcus maripaludis (strain C5 / ATCC BAA-1333).